The sequence spans 178 residues: DNA-directed RNA polymerase subunit beta (178 aa).

It belongs to the RNA polymerase beta chain family. The RNAP catalytic core consists of 2 alpha, 1 beta, 1 beta' and 1 omega subunit. When a sigma factor is associated with the core the holoenzyme is formed, which can initiate transcription.

It carries out the reaction RNA(n) + a ribonucleoside 5'-triphosphate = RNA(n+1) + diphosphate. DNA-dependent RNA polymerase catalyzes the transcription of DNA into RNA using the four ribonucleoside triphosphates as substrates. This chain is DNA-directed RNA polymerase subunit beta (rpoB), found in Liberibacter asiaticus (Citrus greening disease).